We begin with the raw amino-acid sequence, 536 residues long: Subtilisin-like proteinase Spm1 (536 aa).

Positions 1-15 (MKSVILLSLAACAVA) are cleaved as a signal peptide. Positions 16 to 147 (APTAGVETIH…RYEEVKKDEC (132 aa)) are excised as a propeptide. One can recognise an Inhibitor I9 domain in the interval 44 to 137 (YIIKFKKHVD…IERDTIVHTM (94 aa)). Positions 156–462 (PWGLSRVSHR…GGCSNYFEIV (307 aa)) constitute a Peptidase S8 domain. Residues aspartate 192 and histidine 224 each act as charge relay system in the active site. Asparagine 254 and asparagine 294 each carry an N-linked (GlcNAc...) asparagine glycan. Serine 390 acts as the Charge relay system in catalysis.

Belongs to the peptidase S8 family.

It localises to the vacuole. The chain is Subtilisin-like proteinase Spm1 (SPM1) from Pyricularia oryzae (strain 70-15 / ATCC MYA-4617 / FGSC 8958) (Rice blast fungus).